The sequence spans 99 residues: Putative pterin-4-alpha-carbinolamine dehydratase (99 aa).

It belongs to the pterin-4-alpha-carbinolamine dehydratase family.

The catalysed reaction is (4aS,6R)-4a-hydroxy-L-erythro-5,6,7,8-tetrahydrobiopterin = (6R)-L-erythro-6,7-dihydrobiopterin + H2O. The polypeptide is Putative pterin-4-alpha-carbinolamine dehydratase (Aquifex aeolicus (strain VF5)).